The primary structure comprises 1531 residues: MATGDGIIAAPPSLESSSLDPLHVLPASSSTAARSLATSIPALTASFSVVSGFSSHLPPPPVTPPAPSTMVGWIGWIFSFIFQVIPSVLYWIVTFTTITLPTWLFTLFSMSLTFTMNFTTLLLIALAVVSTISWFIRYRFLNMYSRLPPEPQRKEPQLDLFPDVPDSDTKPGLANYLDEFLSAIKVFGYLERPVFHELTRTMQTRKLIAGETLLLEEEKGFCLVVDGLVQIFVKSMRDRKSGSDEELNRMAGESSDEDDHRPDGRQGYQLLTEVKNGASMSSLFSILSLFTEDVQLRYADSSASSASSIGPGLAIGPDSFPASPREMDDSPHVYQGDRLDPASHRNSTAEDLPAVPPLNLGESQVPPAHSARSESRKYSGKTRRKSVHPDIVARAMVDTTIAIIPASAFRRLTRVYPKATAHIVQVILTRLQRVTFATAHSYLGLNNEVLGIEKQMTKFTTYDLPNELRGSALDRLKDKFIKERDRLGQEEVTKGIALHNPYGGRRPRSSSFRRKEAALQAKMVASKRPVSMVAQDSALSDRENSGVSPGDLLSTIQLSRFGPRYEHLAPRLLSPLTEKEHSPLRSPSPMIPGRASPFHRKESLDEDALFRESILECIMKGIGLTGSTNDFLRKSSHPSGDVSPKLLSYDSRRQKAVFSNNAFGFIDPYEGSADGESESMMSMSVTSAGGTSPIVNLREELRNDIEIVYFPQGSVLVEQGERHPGLYYVVDGFLDVGIPVDDKEEDLVGSSRPAHEELFPMLRRTNTSSSRVSGSAAAANDPRRKKQSRRSLYLIKPGGIQGYVGAVASYRSYTDVVAKTDVYVGFLPRASLERIAERYPLALLTLAKRLTSLLPRLLLHIDFALEWVQVSAGQVIYHQGDESDAIYLALNGRLRSVHEGPNGKMTVVGEYGQGESVGELEVMTESTRPATLHAIRDTELAKFPRTLFNSLAQEHPGITIQVSKLIAQRMRDLVETPLAEKGGEPGVSGTVKTAKSTLNLRTVGILPVTAGVPVVEFGNRLLQALHQIGVTNGATSLNQAAILNHLGRHAFSKMGKLKLSQYLADLEEKYGMVLYIADTSVNSPWTQTCITQADCILLVGLAESTPSIGEYERFLLGMKTTARKELVLLHGERYCPPGLTRQWLKNRVWINGGHHHVQMAFRLTAEPSHPQTKRFGTVLKQRVQVIQAEIQKYTSRRIRQSPLYSAQTPFKGDFHRLARRLCGRSVGLVLGGGGARGIAQVGVIKALEEAGIPIDVIGGTSIGSFIGALYARDADVVPMYGRAKKFAGRMGSIWRFALDLTYPTVSYTTGHEFNRGIFKTFGDSQIEDFWLEFYCNTTNISRSRAEYHSSGYTWRYVRASMSLAGLIPPICDEGSMLLDGGYIDNLTVDHMKGLGADVIFAVDVGSIDDNTPQVYGDSLSGFWAVVNRWNPFSSCPNPPTLSEIQARLAYVSSIENLERAKNTPGCLYMRPPIDPYGTLDFAKFDEIYQLGYAYGKNYLEKLKREGSLPLPEETEEKKKLQRTLAPRRASI.

The Cytoplasmic portion of the chain corresponds to 1-72 (MATGDGIIAA…TPPAPSTMVG (72 aa)). Residues 73–93 (WIGWIFSFIFQVIPSVLYWIV) form a helical membrane-spanning segment. Over 94–115 (TFTTITLPTWLFTLFSMSLTFT) the chain is Lumenal. The chain crosses the membrane as a helical span at residues 116–136 (MNFTTLLLIALAVVSTISWFI). Residues 137 to 1531 (RYRFLNMYSR…RTLAPRRASI (1395 aa)) are Cytoplasmic-facing. Disordered regions lie at residues 242–265 (GSDEELNRMAGESSDEDDHRPDGR), 303–385 (ASSA…TRRK), and 766–789 (NTSSSRVSGSAAAANDPRRKKQSR). Positions 325 to 343 (REMDDSPHVYQGDRLDPAS) are enriched in basic and acidic residues. Residues 689–809 (GGTS…AVAS) and 849–969 (RLTS…IAQR) each bind a nucleoside 3',5'-cyclic phosphate. Residues 768-779 (SSSRVSGSAAAA) are compositionally biased toward low complexity. The region spanning 1228–1392 (LVLGGGGARG…IDNLTVDHMK (165 aa)) is the PNPLA domain. Residues 1232–1237 (GGGARG) carry the GXGXXG motif. The GXSXG motif lies at 1259–1263 (GTSIG). The active-site Nucleophile is Ser-1261. Catalysis depends on Asp-1379, which acts as the Proton acceptor. The DGA/G signature appears at 1379–1381 (DGG). A disordered region spans residues 1510 to 1531 (LPEETEEKKKLQRTLAPRRASI).

This sequence belongs to the NTE family.

Its subcellular location is the endoplasmic reticulum membrane. It catalyses the reaction a 1-acyl-sn-glycero-3-phosphocholine + H2O = sn-glycerol 3-phosphocholine + a fatty acid + H(+). Its activity is regulated as follows. Inhibited by organophosphorus esters. Its function is as follows. Intracellular phospholipase B that catalyzes the double deacylation of phosphatidylcholine (PC) to glycerophosphocholine (GroPCho). Plays an important role in membrane lipid homeostasis. Responsible for the rapid PC turnover in response to inositol, elevated temperatures, or when choline is present in the growth medium. The polypeptide is Lysophospholipase nte1 (nte1) (Aspergillus niger (strain ATCC MYA-4892 / CBS 513.88 / FGSC A1513)).